The sequence spans 136 residues: Small ribosomal subunit protein uS8c (136 aa).

It belongs to the universal ribosomal protein uS8 family. As to quaternary structure, part of the 30S ribosomal subunit.

The protein localises to the plastid. It is found in the chloroplast. In terms of biological role, one of the primary rRNA binding proteins, it binds directly to 16S rRNA central domain where it helps coordinate assembly of the platform of the 30S subunit. In Saccharum officinarum (Sugarcane), this protein is Small ribosomal subunit protein uS8c (rps8).